The primary structure comprises 259 residues: Phosphate import ATP-binding protein PstB (259 aa).

Positions 13–254 (LEVNNLNFHY…PRLQRTEDYI (242 aa)) constitute an ABC transporter domain. Residue 45 to 52 (GPSGCGKS) participates in ATP binding.

This sequence belongs to the ABC transporter superfamily. Phosphate importer (TC 3.A.1.7) family. In terms of assembly, the complex is composed of two ATP-binding proteins (PstB), two transmembrane proteins (PstC and PstA) and a solute-binding protein (PstS).

It is found in the cell inner membrane. It catalyses the reaction phosphate(out) + ATP + H2O = ADP + 2 phosphate(in) + H(+). Part of the ABC transporter complex PstSACB involved in phosphate import. Responsible for energy coupling to the transport system. The chain is Phosphate import ATP-binding protein PstB from Pasteurella multocida (strain Pm70).